Reading from the N-terminus, the 480-residue chain is Probable cyclodipeptide synthase PUL1 (480 aa).

Its pathway is siderophore biosynthesis. Probable cyclodipeptide synthase; part of the PUL gene cluster that mediates the formation of pulcherrimin, a red iron-containing pigment composed of two cyclized and modified leucine molecules that acts as a siderophore, a chelator that binds iron outside the cell for subsequent uptake. Two leucine molecules are cyclized via a cyclodipeptide synthase, and the resulting diketopiperazine is oxidized by a cytochrome P450 monooxygenase to generate pulcherriminic acid (PA), which can then spontaneously bind iron to form pulcherrimin. The probable cyclodipeptide synthase PUL1 and the cytochrome P450 monooxygenase PUL2 encode the enzymes responsible for the two-step pulcherrimin biosynthesis pathway. The sequence is that of Probable cyclodipeptide synthase PUL1 from Kluyveromyces lactis (strain ATCC 8585 / CBS 2359 / DSM 70799 / NBRC 1267 / NRRL Y-1140 / WM37) (Yeast).